We begin with the raw amino-acid sequence, 57 residues long: Myrmicitoxin(1)-Pm7a (57 aa).

Residues 1–23 form the signal peptide; the sequence is MMKIIYAFLLIAVVAFMGSGIMA. Residues 24–31 constitute a propeptide that is removed on maturation; the sequence is EPLAEAIA.

This sequence belongs to the formicidae venom clade 4 family. In terms of tissue distribution, expressed by the venom gland.

The protein localises to the secreted. Functionally, probable neurotoxin. The sequence is that of Myrmicitoxin(1)-Pm7a from Pogonomyrmex maricopa (Maricopa harvester ant).